Reading from the N-terminus, the 54-residue chain is Lectin alpha chain (54 aa).

The protein belongs to the leguminous lectin family. In terms of assembly, tetramer of two alpha and two beta chains.

In Lathyrus odoratus (Sweet pea), this protein is Lectin alpha chain.